The following is a 256-amino-acid chain: Zinc metalloprotease (256 aa).

H74 serves as the catalytic Proton donor.

The protein belongs to the peptidase M4 family. Zn(2+) serves as cofactor.

It localises to the secreted. Functionally, may play a role in ulcer formation. Proteolytic digestion of gastric mucus has been suggested as an important mechanism by which its pathogenicity is at least partly exerted. The chain is Zinc metalloprotease (hap) from Helicobacter pylori (Campylobacter pylori).